The chain runs to 93 residues: Large ribosomal subunit protein uL23c (93 aa).

This sequence belongs to the universal ribosomal protein uL23 family. In terms of assembly, part of the 50S ribosomal subunit.

The protein resides in the plastid. The protein localises to the chloroplast. Its function is as follows. Binds to 23S rRNA. This Fragaria ananassa (Strawberry) protein is Large ribosomal subunit protein uL23c (rpl23).